The primary structure comprises 130 residues: Small ribosomal subunit protein uS9 (130 aa).

Belongs to the universal ribosomal protein uS9 family.

This is Small ribosomal subunit protein uS9 from Pectobacterium carotovorum subsp. carotovorum (strain PC1).